A 314-amino-acid polypeptide reads, in one-letter code: Probable UDP-sugar transporter protein SLC35A4 (314 aa).

Residues 1 to 20 are Cytoplasmic-facing; that stretch reads MIAISADESPESSSPALRLR. Residues 21-41 traverse the membrane as a helical segment; sequence WLFLLLLLVLIYGSHAPLLSL. Residues 42–54 lie on the Lumenal side of the membrane; the sequence is CKTQAQIPFSASS. A helical transmembrane segment spans residues 55-75; it reads CVLLIETSKLFISFASLLASG. Over 76-88 the chain is Cytoplasmic; sequence SVSTLRISISMTT. The chain crosses the membrane as a helical span at residues 89 to 109; that stretch reads ASPYAVPAVLYAFNNHLVVFM. Residues 110–145 lie on the Lumenal side of the membrane; it reads QAYMDPSSFQVLSNLKIASTALLYTSCLGKRLHRRQ. The helical transmembrane segment at 146–166 threads the bilayer; sequence WFAMGLLVSAGVSHSCFSYDL. The Cytoplasmic segment spans residues 167 to 175; it reads EGKRETAVY. Residues 176–196 form a helical membrane-spanning segment; the sequence is ITSWGLLLVLVYCFVSGLAAV. Topologically, residues 197–206 are lumenal; the sequence is YTERVLKSQR. Residues 207-227 form a helical membrane-spanning segment; the sequence is LPLSMQNLFLYTFGVVVNLAS. Over 228-242 the chain is Cytoplasmic; sequence HLSGGEQKGFFEGYS. A helical transmembrane segment spans residues 243-263; that stretch reads AVVWVIVAGQVANGLLMSVVM. Residues 264 to 267 lie on the Lumenal side of the membrane; sequence KHGT. A helical membrane pass occupies residues 268–290; sequence GITRLFVISSAMLVNAVLSWGIL. At 291–314 the chain is on the cytoplasmic side; sequence GVQLTGYFLFPVVLIGWAVYLYYT.

It belongs to the nucleotide-sugar transporter family. SLC35A subfamily.

The protein resides in the golgi apparatus membrane. It catalyses the reaction CDP-L-ribitol(in) + CDP(out) = CDP-L-ribitol(out) + CDP(in). Functionally, mediates the transport of CDP-ribitol. Does not exhibit CMP-sialic acid, UDP-galactose and UDP-N-acetylglucosamine transport activity. The sequence is that of Probable UDP-sugar transporter protein SLC35A4 from Danio rerio (Zebrafish).